A 512-amino-acid chain; its full sequence is Maturase K (512 aa).

Belongs to the intron maturase 2 family. MatK subfamily.

It is found in the plastid. The protein resides in the chloroplast. In terms of biological role, usually encoded in the trnK tRNA gene intron. Probably assists in splicing its own and other chloroplast group II introns. The sequence is that of Maturase K from Lemna aequinoctialis (Lesser duckweed).